The chain runs to 151 residues: SsrA-binding protein (151 aa).

This sequence belongs to the SmpB family.

It localises to the cytoplasm. Required for rescue of stalled ribosomes mediated by trans-translation. Binds to transfer-messenger RNA (tmRNA), required for stable association of tmRNA with ribosomes. tmRNA and SmpB together mimic tRNA shape, replacing the anticodon stem-loop with SmpB. tmRNA is encoded by the ssrA gene; the 2 termini fold to resemble tRNA(Ala) and it encodes a 'tag peptide', a short internal open reading frame. During trans-translation Ala-aminoacylated tmRNA acts like a tRNA, entering the A-site of stalled ribosomes, displacing the stalled mRNA. The ribosome then switches to translate the ORF on the tmRNA; the nascent peptide is terminated with the 'tag peptide' encoded by the tmRNA and targeted for degradation. The ribosome is freed to recommence translation, which seems to be the essential function of trans-translation. This chain is SsrA-binding protein, found in Wolinella succinogenes (strain ATCC 29543 / DSM 1740 / CCUG 13145 / JCM 31913 / LMG 7466 / NCTC 11488 / FDC 602W) (Vibrio succinogenes).